The primary structure comprises 245 residues: Probable phosphatase YpAngola_A2446 (245 aa).

Zn(2+) contacts are provided by His-7, His-9, His-15, His-40, Glu-73, His-101, His-131, Asp-192, and His-194.

Belongs to the PHP family. In terms of assembly, homotrimer. It depends on Zn(2+) as a cofactor.

The sequence is that of Probable phosphatase YpAngola_A2446 from Yersinia pestis bv. Antiqua (strain Angola).